Consider the following 188-residue polypeptide: GTP cyclohydrolase 1 (188 aa).

Positions 76, 79, and 148 each coordinate Zn(2+).

This sequence belongs to the GTP cyclohydrolase I family. In terms of assembly, homomer.

It catalyses the reaction GTP + H2O = 7,8-dihydroneopterin 3'-triphosphate + formate + H(+). It functions in the pathway cofactor biosynthesis; 7,8-dihydroneopterin triphosphate biosynthesis; 7,8-dihydroneopterin triphosphate from GTP: step 1/1. In Pelotomaculum thermopropionicum (strain DSM 13744 / JCM 10971 / SI), this protein is GTP cyclohydrolase 1.